Here is a 320-residue protein sequence, read N- to C-terminus: Cytochrome f (320 aa).

Positions 1–36 are cleaved as a signal peptide; it reads MKHTNSKQKLKDIINFCQAIFTLCIICLYQANISNS. Heme is bound by residues Tyr-37, Cys-57, Cys-60, and His-61. The chain crosses the membrane as a helical span at residues 286–305; the sequence is LISFIFFSISVLISQLFFVL.

It belongs to the cytochrome f family. In terms of assembly, the 4 large subunits of the cytochrome b6-f complex are cytochrome b6, subunit IV (17 kDa polypeptide, petD), cytochrome f and the Rieske protein, while the 4 small subunits are PetG, PetL, PetM and PetN. The complex functions as a dimer. The cofactor is heme.

The protein localises to the plastid. It is found in the chloroplast thylakoid membrane. Component of the cytochrome b6-f complex, which mediates electron transfer between photosystem II (PSII) and photosystem I (PSI), cyclic electron flow around PSI, and state transitions. The sequence is that of Cytochrome f (petA) from Cyanidium caldarium (Red alga).